The chain runs to 418 residues: Cyclin-dependent kinase 15 (418 aa).

The 286-residue stretch at 84–369 (YLNLEKLGEG…AQDALLHPYF (286 aa)) folds into the Protein kinase domain. Residues 90 to 98 (LGEGTYATV) and K113 contribute to the ATP site. The active-site Proton acceptor is the D205.

It belongs to the protein kinase superfamily. CMGC Ser/Thr protein kinase family. CDC2/CDKX subfamily. The cofactor is Mg(2+).

It catalyses the reaction L-seryl-[protein] + ATP = O-phospho-L-seryl-[protein] + ADP + H(+). The enzyme catalyses L-threonyl-[protein] + ATP = O-phospho-L-threonyl-[protein] + ADP + H(+). In terms of biological role, serine/threonine-protein kinase involved in the control of the eukaryotic cell cycle, whose activity is controlled by an associated cyclin. The sequence is that of Cyclin-dependent kinase 15 (cdk15) from Danio rerio (Zebrafish).